The following is a 252-amino-acid chain: 14-3-3 protein 10 (252 aa).

The protein belongs to the 14-3-3 family. In terms of assembly, homodimer.

In Solanum lycopersicum (Tomato), this protein is 14-3-3 protein 10 (TFT10).